A 131-amino-acid polypeptide reads, in one-letter code: Interleukin-13 (131 aa).

Residues 1-18 form the signal peptide; that stretch reads MALWLTLVIALTCFGGLA. 4 N-linked (GlcNAc...) asparagine glycosylation sites follow: N39, N50, N58, and N74. Intrachain disulfides connect C49–C78 and C66–C92.

This sequence belongs to the IL-4/IL-13 family. As to quaternary structure, interacts with IL13RA2.

The protein resides in the secreted. Its function is as follows. Cytokine that plays important roles in allergic inflammation and immune response to parasite infection. Synergizes with IL2 in regulating interferon-gamma synthesis. Stimulates B-cell proliferation, and activation of eosinophils, basophils, and mast cells. Plays an important role in controlling IL33 activity by modulating the production of transmembrane and soluble forms of interleukin-1 receptor-like 1/IL1RL1. Displays the capacity to antagonize Th1-driven proinflammatory immune response and downregulates synthesis of many proinflammatory cytokines including IL1, IL6, IL10, IL12 and TNF-alpha through a mechanism that partially involves suppression of NF-kappa-B. Also functions on nonhematopoietic cells, including endothelial cells where it induces vascular cell adhesion protein 1/VCAM1, which is important in the recruitment of eosinophils. Exerts its biological effects through its receptors which comprises the IL4R chain and the IL13RA1 chain, to activate JAK1 and TYK2, leading to the activation of STAT6. Aside from IL13RA1, another receptor IL13RA2 acts as a high affinity decoy for IL13 and mediates internalization and depletion of extracellular IL13. The protein is Interleukin-13 (IL13) of Sus scrofa (Pig).